Reading from the N-terminus, the 1282-residue chain is Ribosome biogenesis protein BMS1 homolog (1282 aa).

Residues 1–24 (MEAKDQKKHRKKNSGPKAAKKKKR) show a composition bias toward basic residues. Residues 1 to 43 (MEAKDQKKHRKKNSGPKAAKKKKRLLQDLQLGDEEDARKRNPK) form a disordered region. Residue K43 forms a Glycyl lysine isopeptide (Lys-Gly) (interchain with G-Cter in SUMO2) linkage. Positions 80 to 245 (PPPIVVVVMG…GRFITVMKFR (166 aa)) constitute a Bms1-type G domain. Residues 89 to 96 (GPPKVGKS) form a G1 region. 89–96 (GPPKVGKS) provides a ligand contact to ATP. The tract at residues 117-121 (PVTIV) is G2. A G3 region spans residues 132 to 135 (ECGC). Residues 184–187 (THLD) form a G4 region. A Phosphoserine modification is found at S188. The interval 219–228 (LSGMVHGEYQ) is G5. Disordered regions lie at residues 397–557 (DSKP…ANCQ) and 575–667 (PTFD…ALKW). Glycyl lysine isopeptide (Lys-Gly) (interchain with G-Cter in SUMO2) cross-links involve residues K399 and K415. Acidic residues-rich tracts occupy residues 434-472 (GDED…ENAE) and 503-531 (DSDD…EDCT). The span at 535–550 (KGISGSKAAGEGSKAG) shows a compositional bias: low complexity. Position 552 is a phosphoserine (S552). A compositionally biased stretch (acidic residues) spans 588–610 (FASEDESEESSSLSAEEEDSENE). Phosphoserine is present on residues S625 and S639. K646 is covalently cross-linked (Glycyl lysine isopeptide (Lys-Gly) (interchain with G-Cter in SUMO2)). The span at 653-667 (EENNDSKETSGALKW) shows a compositional bias: basic and acidic residues. At T708 the chain carries Phosphothreonine. Disordered regions lie at residues 787-822 (ETGD…ESAK) and 1178-1202 (NKPK…IREP). Residue K810 forms a Glycyl lysine isopeptide (Lys-Gly) (interchain with G-Cter in SUMO1); alternate linkage. Residue K810 forms a Glycyl lysine isopeptide (Lys-Gly) (interchain with G-Cter in SUMO2); alternate linkage. Residue K1206 forms a Glycyl lysine isopeptide (Lys-Gly) (interchain with G-Cter in SUMO2) linkage. Residues 1219 to 1282 (SQKMKKAKEQ…SLKGAEGQLQ (64 aa)) are disordered. Basic and acidic residues predominate over residues 1228–1248 (QRHLHNKEHFRAKQKEEEEKL). Residues 1249 to 1259 (KRQKDLRKKLF) are compositionally biased toward basic residues.

Belongs to the TRAFAC class translation factor GTPase superfamily. Bms1-like GTPase family. BMS1 subfamily. As to quaternary structure, part of the small subunit (SSU) processome, composed of more than 70 proteins and the RNA chaperone small nucleolar RNA (snoRNA) U3. Interacts with RCL1.

The protein localises to the nucleus. The protein resides in the nucleolus. The enzyme catalyses GTP + H2O = GDP + phosphate + H(+). Functionally, GTPase required for the synthesis of 40S ribosomal subunits and for processing of pre-ribosomal RNA (pre-rRNA) at sites A0, A1, and A2. Controls access of pre-rRNA intermediates to RCL1 during ribosome biogenesis by binding RCL1 in a GTP-dependent manner, and delivering it to pre-ribosomes. GTP-binding and/or GTP hydrolysis may induce conformational rearrangements within the BMS1-RCL1 complex allowing the interaction of RCL1 with its RNA substrate. Required for RCL1 import into the nucleus. This chain is Ribosome biogenesis protein BMS1 homolog, found in Homo sapiens (Human).